A 63-amino-acid chain; its full sequence is Light-harvesting protein B-800/850 alpha chain (63 aa).

Residues 1-14 lie on the Cytoplasmic side of the membrane; that stretch reads MNNAKMWLVVKPTV. The helical transmembrane segment at 15-35 threads the bilayer; that stretch reads GIPLFLVACAIASFLVHLMLV. An a bacteriochlorophyll-binding site is contributed by H31. The Periplasmic portion of the chain corresponds to 36–63; it reads LTTGWMGDYYSGSFEAASLVSNATTLLS.

This sequence belongs to the antenna complex alpha subunit family. In terms of assembly, the core complex is formed by different alpha and beta chains, binding bacteriochlorophyll molecules, and arranged most probably in tetrameric structures disposed around the reaction center. The non-pigmented gamma chains may constitute additional components.

The protein localises to the cell inner membrane. In terms of biological role, antenna complexes are light-harvesting systems, which transfer the excitation energy to the reaction centers. In Rhodovulum sulfidophilum (Rhodobacter sulfidophilus), this protein is Light-harvesting protein B-800/850 alpha chain (pucA).